A 270-amino-acid chain; its full sequence is Cross-pathway control protein 1 (270 aa).

Disordered regions lie at residues 114-135 (QAQA…QTQP) and 153-213 (QTVH…IIVE). Over residues 184 to 195 (SVSPPSGRHSSV) the composition is skewed to low complexity. In terms of domain architecture, bZIP spans 216 to 270 (SDVVAMKRARNTLAARKSRERKAQRLEELEAKIEELIAERDRWKNLALAHGASTE). Residues 222–240 (KRARNTLAARKSRERKAQR) form a basic motif region. A leucine-zipper region spans residues 241 to 248 (LEELEAKI).

The protein belongs to the bZIP family. GCN4 subfamily. Binds DNA as a dimer.

It is found in the nucleus. Functionally, in N.crassa grown under amino acid starvation conditions, this protein is required for increasing the transcription of the genes coding for many amino acid biosynthetic pathways enzymes. This transcription factor binds and recognize the DNA sequence: 5'-TGACTC-3'. The sequence is that of Cross-pathway control protein 1 (cpc-1) from Neurospora crassa (strain ATCC 24698 / 74-OR23-1A / CBS 708.71 / DSM 1257 / FGSC 987).